Reading from the N-terminus, the 166-residue chain is Glutamyl-tRNA(Gln) amidotransferase subunit C, mitochondrial (166 aa).

The transit peptide at 1–44 (MIRGWTIFTLCKPSALVGSSHFNKQFNWAKSQLQFATKVPQQPY) directs the protein to the mitochondrion.

It belongs to the GatC family. As to quaternary structure, subunit of the heterotrimeric GatCAB amidotransferase (AdT) complex, composed of A, B and C subunits.

It localises to the mitochondrion. It catalyses the reaction L-glutamyl-tRNA(Gln) + L-glutamine + ATP + H2O = L-glutaminyl-tRNA(Gln) + L-glutamate + ADP + phosphate + H(+). Allows the formation of correctly charged Gln-tRNA(Gln) through the transamidation of misacylated Glu-tRNA(Gln) in the mitochondria. The reaction takes place in the presence of glutamine and ATP through an activated gamma-phospho-Glu-tRNA(Gln). The protein is Glutamyl-tRNA(Gln) amidotransferase subunit C, mitochondrial of Anopheles darlingi (Mosquito).